The sequence spans 145 residues: D-aminoacyl-tRNA deacylase (145 aa).

Residues 137 to 138 (GP) carry the Gly-cisPro motif, important for rejection of L-amino acids motif.

The protein belongs to the DTD family. As to quaternary structure, homodimer.

The protein resides in the cytoplasm. It carries out the reaction glycyl-tRNA(Ala) + H2O = tRNA(Ala) + glycine + H(+). The catalysed reaction is a D-aminoacyl-tRNA + H2O = a tRNA + a D-alpha-amino acid + H(+). In terms of biological role, an aminoacyl-tRNA editing enzyme that deacylates mischarged D-aminoacyl-tRNAs. Also deacylates mischarged glycyl-tRNA(Ala), protecting cells against glycine mischarging by AlaRS. Acts via tRNA-based rather than protein-based catalysis; rejects L-amino acids rather than detecting D-amino acids in the active site. By recycling D-aminoacyl-tRNA to D-amino acids and free tRNA molecules, this enzyme counteracts the toxicity associated with the formation of D-aminoacyl-tRNA entities in vivo and helps enforce protein L-homochirality. This Pectobacterium carotovorum subsp. carotovorum (strain PC1) protein is D-aminoacyl-tRNA deacylase.